We begin with the raw amino-acid sequence, 445 residues long: UNC93-like protein MFSD11 (445 aa).

The helical transmembrane segment at 8-28 (LLNIVILGVGFMFMFTAFQTS) threads the bilayer. The N-linked (GlcNAc...) asparagine glycan is linked to Asn40. The next 4 helical transmembrane spans lie at 52–72 (LAII…VIAV), 74–94 (GCQM…AMFI), 98–118 (TWSF…LWTA), and 138–158 (IFWA…YLAW). Residue Asn163 is glycosylated (N-linked (GlcNAc...) asparagine). The next 7 helical transmembrane spans lie at 170-190 (RTVF…FFLI), 239-259 (MLLL…YSGV), 277-297 (LIGL…GLFG), 309-329 (PVVI…YLYM), 343-363 (LSAF…LLGL), 385-405 (APAF…AFFY), and 415-435 (LLIL…VEWG).

Belongs to the unc-93 family.

The protein resides in the membrane. This chain is UNC93-like protein MFSD11 (mfsd11), found in Xenopus laevis (African clawed frog).